The chain runs to 87 residues: Small ribosomal subunit protein bS20 (87 aa).

Belongs to the bacterial ribosomal protein bS20 family.

Its function is as follows. Binds directly to 16S ribosomal RNA. The sequence is that of Small ribosomal subunit protein bS20 from Finegoldia magna (strain ATCC 29328 / DSM 20472 / WAL 2508) (Peptostreptococcus magnus).